The sequence spans 445 residues: tRNA-2-methylthio-N(6)-dimethylallyladenosine synthase (445 aa).

An MTTase N-terminal domain is found at 2 to 122 (KKAFVKSYGC…LPDLLARSRE (121 aa)). [4Fe-4S] cluster-binding residues include Cys-11, Cys-47, Cys-85, Cys-157, Cys-161, and Cys-164. In terms of domain architecture, Radical SAM core spans 143–378 (RTLGASAFLT…LDSQRHAYQR (236 aa)). In terms of domain architecture, TRAM spans 378-440 (RAAAGRVFDV…SNSLFGELVS (63 aa)).

Belongs to the methylthiotransferase family. MiaB subfamily. Monomer. [4Fe-4S] cluster serves as cofactor.

It localises to the cytoplasm. It catalyses the reaction N(6)-dimethylallyladenosine(37) in tRNA + (sulfur carrier)-SH + AH2 + 2 S-adenosyl-L-methionine = 2-methylsulfanyl-N(6)-dimethylallyladenosine(37) in tRNA + (sulfur carrier)-H + 5'-deoxyadenosine + L-methionine + A + S-adenosyl-L-homocysteine + 2 H(+). In terms of biological role, catalyzes the methylthiolation of N6-(dimethylallyl)adenosine (i(6)A), leading to the formation of 2-methylthio-N6-(dimethylallyl)adenosine (ms(2)i(6)A) at position 37 in tRNAs that read codons beginning with uridine. This Methylobacterium radiotolerans (strain ATCC 27329 / DSM 1819 / JCM 2831 / NBRC 15690 / NCIMB 10815 / 0-1) protein is tRNA-2-methylthio-N(6)-dimethylallyladenosine synthase.